The sequence spans 477 residues: UDP-N-acetylmuramate--L-alanine ligase (477 aa).

An ATP-binding site is contributed by G112 to T118.

It belongs to the MurCDEF family.

The protein localises to the cytoplasm. The enzyme catalyses UDP-N-acetyl-alpha-D-muramate + L-alanine + ATP = UDP-N-acetyl-alpha-D-muramoyl-L-alanine + ADP + phosphate + H(+). The protein operates within cell wall biogenesis; peptidoglycan biosynthesis. Its function is as follows. Cell wall formation. This is UDP-N-acetylmuramate--L-alanine ligase from Verminephrobacter eiseniae (strain EF01-2).